The sequence spans 217 residues: Protein dao-4 (217 aa).

Positions 1–21 (MKIALYSILLITVCYLSSTDA) are cleaved as a signal peptide.

It localises to the nucleus. It is found in the secreted. Its function is as follows. Probably acts downstream of the Wnt signaling pathway. The polypeptide is Protein dao-4 (Caenorhabditis elegans).